The following is a 650-amino-acid chain: Alpha-agglutinin (650 aa).

The N-terminal stretch at 1-19 (MFTFLKIILWLFSLALASA) is a signal peptide. N-linked (GlcNAc...) asparagine glycans are attached at residues Asn-79, Asn-109, Asn-135, and Asn-248. Cys-97 and Cys-114 are disulfide-bonded. The cysteines at positions 202 and 300 are disulfide-linked. Positions 216 to 322 (YDSSNNNVDL…FSTTREFIVY (107 aa)) are ig-like fold domain important for alpha-agglutinin activity, contributing to a functional binding site for a-agglutinin. O-linked (Man...) serine glycosylation is present at Ser-282. Residues Thr-289, Thr-299, and Thr-303 are each glycosylated (O-linked (Man...) threonine). A glycan (N-linked (GlcNAc...) asparagine) is linked at Asn-306. 3 O-linked (Man...) threonine glycosylation sites follow: Thr-307, Thr-308, and Thr-311. The O-linked (Man...) serine glycan is linked to Ser-314. Residues Thr-315, Thr-316, and Thr-329 are each glycosylated (O-linked (Man...) threonine). Ser-331, Ser-334, Ser-335, and Ser-338 each carry an O-linked (Man...) serine glycan. Thr-339, Thr-340, Thr-341, Thr-342, and Thr-345 each carry an O-linked (Man...) threonine glycan. 2 consecutive repeat copies span residues 339–378 (TTTT…VTTS) and 384–423 (TATT…ETIS). The interval 339–423 (TTTTDLTSIN…EVISDVETIS (85 aa)) is 2 X 40 AA tandem repeats. Residue Ser-346 is glycosylated (O-linked (Man...) serine). Thr-349 carries an O-linked (Man...) threonine glycan. Ser-350 carries an O-linked (Man...) serine glycan. N-linked (GlcNAc...) asparagine glycans are attached at residues Asn-364, Asn-402, Asn-485, Asn-501, and Asn-614. The GPI-anchor amidated glycine moiety is linked to residue Gly-627. The propeptide at 628-650 (KASIFFSAELGSIIFLLLSYLLF) is removed in mature form.

The protein to C.albicans ALS1. In terms of assembly, interacts with AGA2. Post-translationally, N-glycosylated, and O-glycosylated by both PMT1 and PMT2. The GPI-anchor is attached to the protein in the endoplasmic reticulum and serves to target the protein to the cell surface. There, the glucosamine-inositol phospholipid moiety is cleaved off and the GPI-modified mannoprotein is covalently attached via its lipidless GPI glycan remnant to the 1,6-beta-glucan of the outer cell wall layer.

Its subcellular location is the secreted. It is found in the cell wall. It localises to the membrane. In terms of biological role, cell surface glycoprotein promoting cell-cell contact to facilitate mating. S.cerevisiae A and alpha cells express the complementary cell surface glycoproteins A-agglutinin and alpha-, respectively, which interact with one another to promote cellular aggregation during mating. The protein is Alpha-agglutinin (SAG1) of Saccharomyces cerevisiae (strain ATCC 204508 / S288c) (Baker's yeast).